Here is an 81-residue protein sequence, read N- to C-terminus: uncharacterized protein (81 aa).

A Glycyl lysine isopeptide (Lys-Gly) (interchain with G-Cter in host protein DncV) cross-link involves residue Lys5.

Cross-linked via an isopeptide bond to E.coli host protein DncV during infection.

This is an uncharacterized protein from Enterobacteria phage T4 (Bacteriophage T4).